A 531-amino-acid chain; its full sequence is Ceramide kinase (531 aa).

Residues 1 to 115 are essential for enzyme activity; it reads MGAMGAAEPL…SADEQLCHLW (115 aa). Residues 1–125 form a required for binding to sulfatide and phosphoinositides region; it reads MGAMGAAEPL…LQTLRGLLES (125 aa). The DAGKc domain occupies 128–278; the sequence is SRPKHLLVFI…IDVSSVHYHN (151 aa). Residues 138-140 and 170-174 each bind ATP; these read NPF and TEHAN. 195-198 serves as a coordination point for substrate; that stretch reads GGDG. Aspartate 197 functions as the Proton donor/acceptor in the catalytic mechanism. ATP is bound by residues glutamate 202, 239-241, arginine 304, and arginine 310; that span reads GST. Serine 340 and serine 408 each carry phosphoserine. Residue 502–504 participates in ATP binding; it reads DGE.

It depends on Ca(2+) as a cofactor. Requires Mg(2+) as cofactor. As to expression, high level expression in heart, brain, testis and pancreas; low expression in spleen, liver and lung; not detected in skeletal muscle.

The protein resides in the cytoplasm. It localises to the cell membrane. It carries out the reaction an N-acylsphing-4-enine + ATP = an N-acylsphing-4-enine 1-phosphate + ADP + H(+). The catalysed reaction is N-(hexanoyl)sphing-4-enine + ATP = N-hexanoylsphing-4-enine 1-phosphate + ADP + H(+). The enzyme catalyses N-(acetyl)-sphing-4-enine + ATP = N-(acetyl)-sphing-4-enine-1-phosphate + ADP + H(+). It catalyses the reaction N-hexadecanoylsphing-4-enine + ATP = N-(hexadecanoyl)-sphing-4-enine-1-phosphate + ADP + H(+). It carries out the reaction N-hexanoyl-(4R)-hydroxysphinganine + ATP = N-hexanoyl-(4R)-hydroxysphinganine-1-phosphate + ADP + H(+). Its function is as follows. Catalyzes specifically the phosphorylation of ceramide to form ceramide 1-phosphate. Acts efficiently on natural and analog ceramides (C6, C8, C16 ceramides, and C8-dihydroceramide), to a lesser extent on C2-ceramide and C6-dihydroceramide, but not on other lipids, such as various sphingosines. Shows a greater preference for D-erythro isomer of ceramides. Binds phosphoinositides. In Mus musculus (Mouse), this protein is Ceramide kinase (Cerk).